Reading from the N-terminus, the 498-residue chain is Putative antiporter subunit mnhD2 (498 aa).

14 consecutive transmembrane segments (helical) span residues 2–22 (LSNLLILPMLLPFLCALILVF), 32–52 (YLYLGTMTITTIISLMLLIYV), 78–98 (LSLIMVTTASFVITLIMAYGF), 108–128 (YHLPSFILFLSVGVIGSFLTS), 130–150 (LFNLYVMFEIMLLASFVLITL), 161–181 (IIYVVLNIIGSWLFLLGIGLL), 209–229 (ISLIFLVAFSAKAALVLFMWL), 240–260 (LAALFAALMTKVGAYALIRFF), 271–291 (IHPLLATMAAITMVIGAIGVI), 308–328 (IGFIILGLGTNTFAGINGAIF), 330–350 (LVNDIVVKTLLFFIIGSLVYI), 369–389 (FGVAFIIMIFAIGGVPPFSGF), 403–423 (GNYIGLALMIITSLIAMYSLF), and 451–471 (ILSILVVVVIAIGIAAPVVLN).

The protein belongs to the CPA3 antiporters (TC 2.A.63) subunit D family. As to quaternary structure, may form a heterooligomeric complex that consists of seven subunits: mnhA2, mnhB2, mnhC2, mnhD2, mnhE2, mnhF2 and mnhG2.

It localises to the cell membrane. The polypeptide is Putative antiporter subunit mnhD2 (mnhD2) (Staphylococcus aureus (strain JH1)).